We begin with the raw amino-acid sequence, 423 residues long: Glutamate-1-semialdehyde 2,1-aminomutase (423 aa).

K263 carries the N6-(pyridoxal phosphate)lysine modification.

It belongs to the class-III pyridoxal-phosphate-dependent aminotransferase family. HemL subfamily. It depends on pyridoxal 5'-phosphate as a cofactor.

It is found in the cytoplasm. The enzyme catalyses (S)-4-amino-5-oxopentanoate = 5-aminolevulinate. The protein operates within porphyrin-containing compound metabolism; protoporphyrin-IX biosynthesis; 5-aminolevulinate from L-glutamyl-tRNA(Glu): step 2/2. This chain is Glutamate-1-semialdehyde 2,1-aminomutase, found in Ignicoccus hospitalis (strain KIN4/I / DSM 18386 / JCM 14125).